A 445-amino-acid chain; its full sequence is Putative ATP-dependent RNA helicase L538 (445 aa).

The 138-residue stretch at 14 to 151 folds into the Helicase ATP-binding domain; that stretch reads IEFMKNNRGV…AVLVNIVRGE (138 aa). 27 to 34 serves as a coordination point for ATP; it reads HSTGAGKT. Residues 101-104 carry the DEAH box motif; the sequence is DEAH. The region spanning 273–442 is the Helicase C-terminal domain; sequence KIEDIMKYII…VIDASIENNY (170 aa).

The protein belongs to the DEAD box helicase family. DEAH subfamily.

Its subcellular location is the virion. It catalyses the reaction ATP + H2O = ADP + phosphate + H(+). This is Putative ATP-dependent RNA helicase L538 from Acanthamoeba polyphaga mimivirus (APMV).